Here is a 232-residue protein sequence, read N- to C-terminus: 5'-methylthioadenosine/S-adenosylhomocysteine nucleosidase (232 aa).

E12 acts as the Proton acceptor in catalysis. Residues G78, I152, and 173–174 (ME) each bind substrate. The Proton donor role is filled by D197.

This sequence belongs to the PNP/UDP phosphorylase family. MtnN subfamily. In terms of assembly, homodimer.

It catalyses the reaction S-adenosyl-L-homocysteine + H2O = S-(5-deoxy-D-ribos-5-yl)-L-homocysteine + adenine. The catalysed reaction is S-methyl-5'-thioadenosine + H2O = 5-(methylsulfanyl)-D-ribose + adenine. It carries out the reaction 5'-deoxyadenosine + H2O = 5-deoxy-D-ribose + adenine. Its pathway is amino-acid biosynthesis; L-methionine biosynthesis via salvage pathway; S-methyl-5-thio-alpha-D-ribose 1-phosphate from S-methyl-5'-thioadenosine (hydrolase route): step 1/2. Catalyzes the irreversible cleavage of the glycosidic bond in both 5'-methylthioadenosine (MTA) and S-adenosylhomocysteine (SAH/AdoHcy) to adenine and the corresponding thioribose, 5'-methylthioribose and S-ribosylhomocysteine, respectively. Also cleaves 5'-deoxyadenosine, a toxic by-product of radical S-adenosylmethionine (SAM) enzymes, into 5-deoxyribose and adenine. Thus, is required for in vivo function of the radical SAM enzymes biotin synthase and lipoic acid synthase, that are inhibited by 5'-deoxyadenosine accumulation. The sequence is that of 5'-methylthioadenosine/S-adenosylhomocysteine nucleosidase from Salmonella arizonae (strain ATCC BAA-731 / CDC346-86 / RSK2980).